Here is an 887-residue protein sequence, read N- to C-terminus: Alanine--tRNA ligase (887 aa).

4 residues coordinate Zn(2+): H581, H585, C683, and H687.

It belongs to the class-II aminoacyl-tRNA synthetase family. The cofactor is Zn(2+).

It is found in the cytoplasm. It carries out the reaction tRNA(Ala) + L-alanine + ATP = L-alanyl-tRNA(Ala) + AMP + diphosphate. In terms of biological role, catalyzes the attachment of alanine to tRNA(Ala) in a two-step reaction: alanine is first activated by ATP to form Ala-AMP and then transferred to the acceptor end of tRNA(Ala). Also edits incorrectly charged Ser-tRNA(Ala) and Gly-tRNA(Ala) via its editing domain. The chain is Alanine--tRNA ligase from Ehrlichia canis (strain Jake).